The primary structure comprises 353 residues: MTAILERRESESLWGRFCNWITSTENRLYIGWFGVLMIPTLLTATSVFIIAFIAAPPVDIDGIREPVSGSLLYGNNIISGAIIPTSAAIGLHFYPIWEAASVDEWLYNGGPYELIVLHFLLGVACYMGREWELSFRLGMRPWIAVAYSAPVAAATAVFLIYPIGQGSFSDGMPLGISGTFNFMIVFQAEHNILMHPFHMLGVAGVFGGSLFSAMHGSLVTSSLIRETTENESANEGYRFGQEEETYNIVAAHGYFGRLIFQYASFNNSRSLHFFLAAWPVVGIWFTALGISTMAFNLNGFNFNQSVVDSQGRVINTWADIINRANLGMEVMHERNAHNFPLDLAAMEAPSVNG.

Position 2 is an N-acetylthreonine (Thr-2). The residue at position 2 (Thr-2) is a Phosphothreonine. 3 helical membrane passes run 29–46 (YIGW…TATS), 118–133 (HFLL…EWEL), and 142–156 (WIAV…AATA). His-118 contacts chlorophyll a. Pheophytin a is bound at residue Tyr-126. Positions 170 and 189 each coordinate [CaMn4O5] cluster. The helical transmembrane segment at 197 to 218 (FHMLGVAGVFGGSLFSAMHGSL) threads the bilayer. His-198 lines the chlorophyll a pocket. A quinone is bound by residues His-215 and 264-265 (SF). Residue His-215 participates in Fe cation binding. His-272 is a binding site for Fe cation. A helical transmembrane segment spans residues 274–288 (FLAAWPVVGIWFTAL). [CaMn4O5] cluster is bound by residues His-332, Glu-333, Asp-342, and Ala-344. A propeptide spanning residues 345–353 (AMEAPSVNG) is cleaved from the precursor.

The protein belongs to the reaction center PufL/M/PsbA/D family. As to quaternary structure, PSII is composed of 1 copy each of membrane proteins PsbA, PsbB, PsbC, PsbD, PsbE, PsbF, PsbH, PsbI, PsbJ, PsbK, PsbL, PsbM, PsbT, PsbX, PsbY, PsbZ, Psb30/Ycf12, at least 3 peripheral proteins of the oxygen-evolving complex and a large number of cofactors. It forms dimeric complexes. Requires The D1/D2 heterodimer binds P680, chlorophylls that are the primary electron donor of PSII, and subsequent electron acceptors. It shares a non-heme iron and each subunit binds pheophytin, quinone, additional chlorophylls, carotenoids and lipids. D1 provides most of the ligands for the Mn4-Ca-O5 cluster of the oxygen-evolving complex (OEC). There is also a Cl(-1) ion associated with D1 and D2, which is required for oxygen evolution. The PSII complex binds additional chlorophylls, carotenoids and specific lipids. as cofactor. Tyr-161 forms a radical intermediate that is referred to as redox-active TyrZ, YZ or Y-Z. Post-translationally, C-terminally processed by CTPA; processing is essential to allow assembly of the oxygen-evolving complex and thus photosynthetic growth.

It localises to the plastid. The protein resides in the chloroplast thylakoid membrane. It carries out the reaction 2 a plastoquinone + 4 hnu + 2 H2O = 2 a plastoquinol + O2. Its function is as follows. Photosystem II (PSII) is a light-driven water:plastoquinone oxidoreductase that uses light energy to abstract electrons from H(2)O, generating O(2) and a proton gradient subsequently used for ATP formation. It consists of a core antenna complex that captures photons, and an electron transfer chain that converts photonic excitation into a charge separation. The D1/D2 (PsbA/PsbD) reaction center heterodimer binds P680, the primary electron donor of PSII as well as several subsequent electron acceptors. The protein is Photosystem II protein D1 of Phaseolus vulgaris (Kidney bean).